The sequence spans 326 residues: Zinc-dependent endopolyphosphatase (326 aa).

The Cytoplasmic portion of the chain corresponds to 1–9 (MEDKRKRRA). The helical transmembrane segment at 10–30 (ATLSTALILFVACCVYTLYIF) threads the bilayer. At 31-326 (KFDNPRLSPP…DYELIQVQCS (296 aa)) the chain is on the vacuolar side. Residues N90 and N241 are each glycosylated (N-linked (GlcNAc...) asparagine).

Belongs to the metallophosphoesterase superfamily. In terms of assembly, interacts with PPN1. Zn(2+) serves as cofactor. The cofactor is Co(2+). It depends on Mg(2+) as a cofactor.

It is found in the vacuole membrane. It carries out the reaction [phosphate](n+1) + n H2O = (n+1) phosphate + n H(+). Its activity is regulated as follows. Not sensitive to heparin inhibition. In terms of biological role, catalyzes the hydrolysis of inorganic polyphosphate (polyP) chains of many hundreds of phosphate residues into shorter lengths. Exclusively shows endopolyphosphatase activity, cleaving inside the polyP chain. Together with PPN1, responsible for a substantial fraction of polyphosphatase activity that is necessary to mobilize polyP stores in response to phosphate scarcity. This chain is Zinc-dependent endopolyphosphatase, found in Saccharomyces cerevisiae (strain ATCC 204508 / S288c) (Baker's yeast).